We begin with the raw amino-acid sequence, 576 residues long: Trehalase 2 (576 aa).

The protein belongs to the glycosyl hydrolase 15 family.

It carries out the reaction alpha,alpha-trehalose + H2O = alpha-D-glucose + beta-D-glucose. Its pathway is glycan degradation; trehalose degradation; D-glucose from alpha,alpha-trehalose: step 1/1. In terms of biological role, catalyzes the hydrolysis of alpha,alpha-trehalose into two molecules of D-glucose. The polypeptide is Trehalase 2 (treH2) (Sulfolobus acidocaldarius (strain ATCC 33909 / DSM 639 / JCM 8929 / NBRC 15157 / NCIMB 11770)).